A 212-amino-acid chain; its full sequence is Pyridoxine/pyridoxamine 5'-phosphate oxidase (212 aa).

Residues 7-10 and lysine 65 contribute to the substrate site; that span reads REEY. Residues 60 to 65, 75 to 76, lysine 82, and glutamine 104 each bind FMN; these read RTVLLK and FT. 3 residues coordinate substrate: tyrosine 122, arginine 126, and serine 130. FMN contacts are provided by residues 139–140 and tryptophan 184; that span reads QS. 190–192 provides a ligand contact to substrate; the sequence is RLH. Arginine 194 lines the FMN pocket.

It belongs to the pyridoxamine 5'-phosphate oxidase family. In terms of assembly, homodimer. It depends on FMN as a cofactor.

It carries out the reaction pyridoxamine 5'-phosphate + O2 + H2O = pyridoxal 5'-phosphate + H2O2 + NH4(+). The catalysed reaction is pyridoxine 5'-phosphate + O2 = pyridoxal 5'-phosphate + H2O2. It functions in the pathway cofactor metabolism; pyridoxal 5'-phosphate salvage; pyridoxal 5'-phosphate from pyridoxamine 5'-phosphate: step 1/1. Its pathway is cofactor metabolism; pyridoxal 5'-phosphate salvage; pyridoxal 5'-phosphate from pyridoxine 5'-phosphate: step 1/1. Catalyzes the oxidation of either pyridoxine 5'-phosphate (PNP) or pyridoxamine 5'-phosphate (PMP) into pyridoxal 5'-phosphate (PLP). This is Pyridoxine/pyridoxamine 5'-phosphate oxidase from Rippkaea orientalis (strain PCC 8801 / RF-1) (Cyanothece sp. (strain PCC 8801)).